Here is a 212-residue protein sequence, read N- to C-terminus: Large ribosomal subunit protein uL3 (212 aa).

The segment covering 128–146 (RHGASRGPMKHGSKYHRRT) has biased composition (basic residues). Residues 128–164 (RHGASRGPMKHGSKYHRRTGSLGAKGPARVFKGRNLP) are disordered.

It belongs to the universal ribosomal protein uL3 family. In terms of assembly, part of the 50S ribosomal subunit. Forms a cluster with proteins L14 and L19.

Functionally, one of the primary rRNA binding proteins, it binds directly near the 3'-end of the 23S rRNA, where it nucleates assembly of the 50S subunit. This chain is Large ribosomal subunit protein uL3, found in Desulfitobacterium hafniense (strain Y51).